Here is a 217-residue protein sequence, read N- to C-terminus: Uridylate kinase (217 aa).

6–10 is an ATP binding site; that stretch reads KLSGR. G38 serves as a coordination point for UMP. ATP contacts are provided by G39 and R43. UMP is bound by residues D60 and 107-113; that span reads FQPGQST. Residues N134, Y139, and D142 each contribute to the ATP site.

This sequence belongs to the UMP kinase family. In terms of assembly, homohexamer.

The protein localises to the cytoplasm. It catalyses the reaction UMP + ATP = UDP + ADP. The protein operates within pyrimidine metabolism; CTP biosynthesis via de novo pathway; UDP from UMP (UMPK route): step 1/1. Inhibited by UTP. In terms of biological role, catalyzes the reversible phosphorylation of UMP to UDP. In Pyrobaculum neutrophilum (strain DSM 2338 / JCM 9278 / NBRC 100436 / V24Sta) (Thermoproteus neutrophilus), this protein is Uridylate kinase.